We begin with the raw amino-acid sequence, 180 residues long: ATP synthase subunit delta (180 aa).

Belongs to the ATPase delta chain family. In terms of assembly, F-type ATPases have 2 components, F(1) - the catalytic core - and F(0) - the membrane proton channel. F(1) has five subunits: alpha(3), beta(3), gamma(1), delta(1), epsilon(1). F(0) has three main subunits: a(1), b(2) and c(10-14). The alpha and beta chains form an alternating ring which encloses part of the gamma chain. F(1) is attached to F(0) by a central stalk formed by the gamma and epsilon chains, while a peripheral stalk is formed by the delta and b chains.

Its subcellular location is the cell inner membrane. Functionally, f(1)F(0) ATP synthase produces ATP from ADP in the presence of a proton or sodium gradient. F-type ATPases consist of two structural domains, F(1) containing the extramembraneous catalytic core and F(0) containing the membrane proton channel, linked together by a central stalk and a peripheral stalk. During catalysis, ATP synthesis in the catalytic domain of F(1) is coupled via a rotary mechanism of the central stalk subunits to proton translocation. This protein is part of the stalk that links CF(0) to CF(1). It either transmits conformational changes from CF(0) to CF(1) or is implicated in proton conduction. The chain is ATP synthase subunit delta from Cupriavidus metallidurans (strain ATCC 43123 / DSM 2839 / NBRC 102507 / CH34) (Ralstonia metallidurans).